Reading from the N-terminus, the 487-residue chain is Vacuolar protein sorting-associated protein 30 (487 aa).

Residues 33 to 129 (PQTLKKSSVP…DNPDAPMGSE (97 aa)) are disordered. Residues 52 to 62 (QSRKSIYDRVS) are compositionally biased toward basic and acidic residues. Polar residues predominate over residues 81–94 (SSMSFVLLSESQMA). A coiled-coil region spans residues 152–282 (VECTEMLVEG…DSQLLEKLQR (131 aa)). Residues 283 to 480 (SNVYNDTFCI…LAHASNVTSN (198 aa)) are BARA. The tract at residues 456-481 (WTKACKLTLTCCKFLLAHASNVTSNA) is required for membrane-association, autophagic function during starvation and normal autophagosome morphology.

The protein belongs to the beclin family. As to quaternary structure, component of the autophagy-specific VPS34 PI3-kinase complex I; and of the VPS34 PI3-kinase complex II.

The protein localises to the endosome membrane. Its subcellular location is the vacuole membrane. It is found in the preautophagosomal structure membrane. In terms of biological role, required for cytoplasm to vacuole transport (Cvt), autophagy, nucleophagy, and mitophagy, as a part of the autophagy-specific VPS34 PI3-kinase complex I. This complex is essential to recruit the ATG8-phosphatidylinositol conjugate and the ATG12-ATG5 conjugate to the pre-autophagosomal structure. Also involved in endosome-to-Golgi retrograde transport as part of the VPS34 PI3-kinase complex II. Autophagy is required for proper vegetative growth, asexual/sexual reproduction, and full virulence. Autophagy is particularly involved in the biosynthesis of deoxynivalenol (DON), an important virulence determinant. The protein is Vacuolar protein sorting-associated protein 30 of Gibberella zeae (strain ATCC MYA-4620 / CBS 123657 / FGSC 9075 / NRRL 31084 / PH-1) (Wheat head blight fungus).